The following is a 117-amino-acid chain: Large ribosomal subunit protein bL19 (117 aa).

It belongs to the bacterial ribosomal protein bL19 family.

This protein is located at the 30S-50S ribosomal subunit interface and may play a role in the structure and function of the aminoacyl-tRNA binding site. The protein is Large ribosomal subunit protein bL19 of Christiangramia forsetii (strain DSM 17595 / CGMCC 1.15422 / KT0803) (Gramella forsetii).